The sequence spans 938 residues: Isoleucine--tRNA ligase (938 aa).

The 'HIGH' region signature appears at 58–68 (PYANGSIHIGH). Residue lysine 183 is modified to N6-acetyllysine. An L-isoleucyl-5'-AMP-binding site is contributed by glutamate 561. Positions 602–606 (KMSKS) match the 'KMSKS' region motif. Residue lysine 605 coordinates ATP. Zn(2+) contacts are provided by cysteine 901, cysteine 904, cysteine 921, and cysteine 924.

This sequence belongs to the class-I aminoacyl-tRNA synthetase family. IleS type 1 subfamily. As to quaternary structure, monomer. The cofactor is Zn(2+).

The protein localises to the cytoplasm. It catalyses the reaction tRNA(Ile) + L-isoleucine + ATP = L-isoleucyl-tRNA(Ile) + AMP + diphosphate. In terms of biological role, catalyzes the attachment of isoleucine to tRNA(Ile). As IleRS can inadvertently accommodate and process structurally similar amino acids such as valine, to avoid such errors it has two additional distinct tRNA(Ile)-dependent editing activities. One activity is designated as 'pretransfer' editing and involves the hydrolysis of activated Val-AMP. The other activity is designated 'posttransfer' editing and involves deacylation of mischarged Val-tRNA(Ile). This Escherichia coli O9:H4 (strain HS) protein is Isoleucine--tRNA ligase.